The following is a 796-amino-acid chain: N-terminal acetyltransferase B complex subunit MDM20 (796 aa).

Ser-2 bears the N-acetylserine mark.

This sequence belongs to the MDM20/NAA25 family. In terms of assembly, component of the N-terminal acetyltransferase B (NatB) complex, which is composed of NAT3 and MDM20.

The protein resides in the cytoplasm. Functionally, non-catalytic subunit of the NatB N-terminal acetyltransferase, which catalyzes acetylation of the amino-terminal methionine residues of all proteins beginning with Met-Asp or Met-Glu and of some proteins beginning with Met-Asn or Met-Met. NatB acetylates TPM1 protein and regulates tropomyocin-actin interactions. MDM20 is required for mitochondrial inheritance during budding and together with TPM1, is essential for the integrity and assembly of actin cables. Genetically interacts with CIN8. In Saccharomyces cerevisiae (strain ATCC 204508 / S288c) (Baker's yeast), this protein is N-terminal acetyltransferase B complex subunit MDM20 (MDM20).